The sequence spans 265 residues: Transcriptional repressor DcmR (265 aa).

The H-T-H motif DNA-binding region spans 17–36 (LDIKQAASLLNVSEASLRRW).

In terms of assembly, monomer.

Transcriptional repressor of the dcmA gene and of its own gene. The polypeptide is Transcriptional repressor DcmR (dcmR) (Methylorubrum extorquens (strain DSM 6343 / CIP 106787 / DM4) (Methylobacterium extorquens)).